The primary structure comprises 79 residues: CDC42 small effector protein 1-A (79 aa).

2 S-palmitoyl cysteine lipidation sites follow: C10 and C11. In terms of domain architecture, CRIB spans 30-43; it reads IGEPMNFVHLTHVG.

This sequence belongs to the CDC42SE/SPEC family.

It is found in the cytoplasm. The protein resides in the cytoskeleton. The protein localises to the cell membrane. Functionally, probably involved in the organization of the actin cytoskeleton by acting downstream of CDC42, inducing actin filament assembly. The chain is CDC42 small effector protein 1-A (cdc42se1-a) from Xenopus laevis (African clawed frog).